The following is a 101-amino-acid chain: Aspartyl/glutamyl-tRNA(Asn/Gln) amidotransferase subunit C (101 aa).

Belongs to the GatC family. As to quaternary structure, heterotrimer of A, B and C subunits.

It catalyses the reaction L-glutamyl-tRNA(Gln) + L-glutamine + ATP + H2O = L-glutaminyl-tRNA(Gln) + L-glutamate + ADP + phosphate + H(+). The catalysed reaction is L-aspartyl-tRNA(Asn) + L-glutamine + ATP + H2O = L-asparaginyl-tRNA(Asn) + L-glutamate + ADP + phosphate + 2 H(+). In terms of biological role, allows the formation of correctly charged Asn-tRNA(Asn) or Gln-tRNA(Gln) through the transamidation of misacylated Asp-tRNA(Asn) or Glu-tRNA(Gln) in organisms which lack either or both of asparaginyl-tRNA or glutaminyl-tRNA synthetases. The reaction takes place in the presence of glutamine and ATP through an activated phospho-Asp-tRNA(Asn) or phospho-Glu-tRNA(Gln). The chain is Aspartyl/glutamyl-tRNA(Asn/Gln) amidotransferase subunit C from Enterococcus faecalis (strain ATCC 700802 / V583).